A 75-amino-acid polypeptide reads, in one-letter code: Large ribosomal subunit protein bL31 (75 aa).

This sequence belongs to the bacterial ribosomal protein bL31 family. Type A subfamily. Part of the 50S ribosomal subunit.

Functionally, binds the 23S rRNA. The sequence is that of Large ribosomal subunit protein bL31 from Pelodictyon phaeoclathratiforme (strain DSM 5477 / BU-1).